A 325-amino-acid chain; its full sequence is Pyruvate dehydrogenase E1 component subunit beta (325 aa).

Glu60 serves as a coordination point for thiamine diphosphate.

Heterodimer of an alpha and a beta chain. The cofactor is thiamine diphosphate.

The enzyme catalyses N(6)-[(R)-lipoyl]-L-lysyl-[protein] + pyruvate + H(+) = N(6)-[(R)-S(8)-acetyldihydrolipoyl]-L-lysyl-[protein] + CO2. Its function is as follows. The pyruvate dehydrogenase complex catalyzes the overall conversion of pyruvate to acetyl-CoA and CO(2). It contains multiple copies of three enzymatic components: pyruvate dehydrogenase (E1), dihydrolipoamide acetyltransferase (E2) and lipoamide dehydrogenase (E3). The polypeptide is Pyruvate dehydrogenase E1 component subunit beta (pdhB) (Geobacillus stearothermophilus (Bacillus stearothermophilus)).